A 413-amino-acid chain; its full sequence is D-nopaline dehydrogenase (413 aa).

The protein belongs to the lysopine/nopaline/octopine/opine/vitopine dehydrogenases family. In terms of assembly, homotetramer.

It carries out the reaction D-nopaline + NADP(+) + H2O = L-arginine + 2-oxoglutarate + NADPH + H(+). The polypeptide is D-nopaline dehydrogenase (nos) (Agrobacterium tumefaciens (strain T37)).